Consider the following 661-residue polypeptide: Methyl-accepting chemotaxis protein McpA (661 aa).

Over 1-16 the chain is Cytoplasmic; that stretch reads MKKILQLIKQRSITRK. A helical membrane pass occupies residues 17–37; it reads LLVSFLSILIIPVVILAIFAY. Residues 38–281 are Extracellular-facing; it reads QSASSSLDRQ…IHEAAQPVLH (244 aa). Positions 152–228 constitute a Cache domain; that stretch reads ITDPYKTAST…QSGTELKGDW (77 aa). Residues 282–302 form a helical membrane-spanning segment; sequence LALIVLAAAIIIGIIVMTLII. Residues 303–355 form the HAMP domain; the sequence is RSITTPLKQLVGSSKRISEGDLTETIDIRSKDELGELGKSFNNMASSLRSLIH. At 303-661 the chain is on the cytoplasmic side; that stretch reads RSITTPLKQL…RDMTKRFKIE (359 aa). Glutamate methyl ester (Glu) is present on Glu-370. Positions 374–610 constitute a Methyl-accepting transducer domain; the sequence is SAAQTSKATE…EVSGASEHIA (237 aa). Residues Gln-593 and Gln-594 each carry the deamidated glutamine modification. Glutamate methyl ester (Gln) is present on Gln-594. Glutamate methyl ester (Glu) occurs at positions 629 and 636.

Belongs to the methyl-accepting chemotaxis (MCP) protein family. Interacts with FloT. In terms of processing, deamidated by CheD on Gln-593 and Gln-594, producing glutamate residues. The glutamate residues are then methylated. Other additional sites are deamidated and methylated as well.

The protein localises to the cell membrane. It localises to the membrane raft. In terms of biological role, chemotactic-signal transducers respond to changes in the concentration of attractants and repellents in the environment, transduce a signal from the outside to the inside of the cell, and facilitate sensory adaptation through the variation of the level of methylation. All amino acids serve as attractants in B.subtilis, they appear to cause an increase in the turnover methyl groups, leading to methylation of an unidentified acceptor, while repellents have been shown to cause a decrease in methyl group turnover. The methyl groups are added by a methyltransferase and removed by a methylesterase. McpA is required for taxis towards glucose and alpha-methylglucoside. The protein is Methyl-accepting chemotaxis protein McpA (mcpA) of Bacillus subtilis (strain 168).